A 306-amino-acid chain; its full sequence is UDP-3-O-acyl-N-acetylglucosamine deacetylase (306 aa).

3 residues coordinate Zn(2+): H79, H238, and D242. Catalysis depends on H265, which acts as the Proton donor.

It belongs to the LpxC family. The cofactor is Zn(2+).

The enzyme catalyses a UDP-3-O-[(3R)-3-hydroxyacyl]-N-acetyl-alpha-D-glucosamine + H2O = a UDP-3-O-[(3R)-3-hydroxyacyl]-alpha-D-glucosamine + acetate. Its pathway is glycolipid biosynthesis; lipid IV(A) biosynthesis; lipid IV(A) from (3R)-3-hydroxytetradecanoyl-[acyl-carrier-protein] and UDP-N-acetyl-alpha-D-glucosamine: step 2/6. In terms of biological role, catalyzes the hydrolysis of UDP-3-O-myristoyl-N-acetylglucosamine to form UDP-3-O-myristoylglucosamine and acetate, the committed step in lipid A biosynthesis. This Hamiltonella defensa subsp. Acyrthosiphon pisum (strain 5AT) protein is UDP-3-O-acyl-N-acetylglucosamine deacetylase.